A 227-amino-acid polypeptide reads, in one-letter code: uncharacterized protein (227 aa).

The next 2 membrane-spanning stretches (helical) occupy residues C13–S35 and I155–L177. Residues G192–F227 form a disordered region. Residues G217–F227 are compositionally biased toward pro residues.

The protein resides in the cell membrane. This is an uncharacterized protein from Treponema pallidum (strain Nichols).